The sequence spans 330 residues: Malate dehydrogenase (330 aa).

15-21 (GGTGQIA) lines the NAD(+) pocket. Residues arginine 96 and arginine 102 each contribute to the substrate site. Residues asparagine 109, glutamine 116, and 133 to 135 (VGN) each bind NAD(+). Substrate contacts are provided by asparagine 135 and arginine 166. Histidine 191 functions as the Proton acceptor in the catalytic mechanism.

Belongs to the LDH/MDH superfamily. MDH type 2 family.

The catalysed reaction is (S)-malate + NAD(+) = oxaloacetate + NADH + H(+). In terms of biological role, catalyzes the reversible oxidation of malate to oxaloacetate. The protein is Malate dehydrogenase of Chlamydia caviae (strain ATCC VR-813 / DSM 19441 / 03DC25 / GPIC) (Chlamydophila caviae).